A 483-amino-acid polypeptide reads, in one-letter code: Probable glycine dehydrogenase (decarboxylating) subunit 2 (483 aa).

K264 is subject to N6-(pyridoxal phosphate)lysine.

It belongs to the GcvP family. C-terminal subunit subfamily. The glycine cleavage system is composed of four proteins: P, T, L and H. In this organism, the P 'protein' is a heterodimer of two subunits. Pyridoxal 5'-phosphate is required as a cofactor.

The enzyme catalyses N(6)-[(R)-lipoyl]-L-lysyl-[glycine-cleavage complex H protein] + glycine + H(+) = N(6)-[(R)-S(8)-aminomethyldihydrolipoyl]-L-lysyl-[glycine-cleavage complex H protein] + CO2. Its function is as follows. The glycine cleavage system catalyzes the degradation of glycine. The P protein binds the alpha-amino group of glycine through its pyridoxal phosphate cofactor; CO(2) is released and the remaining methylamine moiety is then transferred to the lipoamide cofactor of the H protein. In Nitrosomonas eutropha (strain DSM 101675 / C91 / Nm57), this protein is Probable glycine dehydrogenase (decarboxylating) subunit 2.